Here is a 314-residue protein sequence, read N- to C-terminus: Protein ATP1B4 (314 aa).

A compositionally biased stretch (polar residues) spans 1–17 (MATTAGEQANYLQSADS). Positions 1 to 37 (MATTAGEQANYLQSADSMSDGRQHHPEEAGEKKQEEQ) are disordered. At 1-69 (MATTAGEQAN…VLGRDKKSWA (69 aa)) the chain is on the cytoplasmic side. Residues 19–37 (SDGRQHHPEEAGEKKQEEQ) are compositionally biased toward basic and acidic residues. The chain crosses the membrane as a helical span at residues 70–90 (LILLFYFILYCFLAGLFALCI). Residues 91 to 314 (YGLLATISPY…GRVAFTLHIG (224 aa)) lie on the Extracellular side of the membrane. C160 and C179 are oxidised to a cystine. N-linked (GlcNAc...) asparagine glycosylation occurs at N188. 2 cysteine pairs are disulfide-bonded: C189/C205 and C228/C287. Residue N264 is glycosylated (N-linked (GlcNAc...) asparagine).

This sequence belongs to the X(+)/potassium ATPases subunit beta family. Composed of two subunits: alpha (catalytic) and beta (accessory). Post-translationally, glycosylated. Expressed in skeletal muscle, liver, lung, kidney, heart, brain and skin.

It localises to the membrane. In terms of biological role, this is the non-catalytic component of the active enzyme, which catalyzes the hydrolysis of ATP coupled with the exchange of Na(+) and K(+) ions across the plasma membrane. The chain is Protein ATP1B4 (atp1b4) from Xenopus laevis (African clawed frog).